A 376-amino-acid polypeptide reads, in one-letter code: tRNA-specific 2-thiouridylase MnmA (376 aa).

ATP contacts are provided by residues 14–21 and Met-40; that span reads GMSGGVDS. Positions 100–102 are interaction with target base in tRNA; the sequence is NPD. Cys-105 functions as the Nucleophile in the catalytic mechanism. Cys-105 and Cys-202 form a disulfide bridge. Residue Gly-129 coordinates ATP. Residues 152 to 154 are interaction with tRNA; sequence KDQ. Residue Cys-202 is the Cysteine persulfide intermediate of the active site. The tract at residues 315-316 is interaction with tRNA; sequence RY.

This sequence belongs to the MnmA/TRMU family.

Its subcellular location is the cytoplasm. The enzyme catalyses S-sulfanyl-L-cysteinyl-[protein] + uridine(34) in tRNA + AH2 + ATP = 2-thiouridine(34) in tRNA + L-cysteinyl-[protein] + A + AMP + diphosphate + H(+). Catalyzes the 2-thiolation of uridine at the wobble position (U34) of tRNA, leading to the formation of s(2)U34. This Lactococcus lactis subsp. cremoris (strain SK11) protein is tRNA-specific 2-thiouridylase MnmA.